Here is a 184-residue protein sequence, read N- to C-terminus: uncharacterized protein (184 aa).

Residues 146 to 177 form a disordered region; the sequence is HPKTSLAQQPNAKATQPPLSKETLNTAKETDP. Over residues 150-172 the composition is skewed to polar residues; that stretch reads SLAQQPNAKATQPPLSKETLNTA.

This is an uncharacterized protein from Picosynechococcus sp. (strain ATCC 27264 / PCC 7002 / PR-6) (Agmenellum quadruplicatum).